The chain runs to 96 residues: Cytoplasmic envelopment protein 3 (96 aa).

Glycine 2 carries the N-myristoyl glycine; by host lipid modification. A Di-leucine-like internalization motif motif is present at residues 18-19 (LI). Residues 37-43 (DIESEEE) are asp/Glu-rich (acidic). Phosphoserine is present on serine 40. Positions 44–96 (GNFYVPPDMRGVTRAPGRQRLRSSDPPSRHTHRRTPGGACPATQFPPPMSDSE) are disordered. Pro residues predominate over residues 87 to 96 (QFPPPMSDSE).

It belongs to the herpesviridae cytoplasmic envelopment protein 3 family. In terms of assembly, interacts with cytoplasmic envelopment protein 2; this interaction is essential for the proper localization of each protein to the assembly complex and thus for the production of infectious virus. Interacts with gE (via C-terminus). Interacts with gD (via C-terminus). Interacts with UL56. In terms of processing, myristoylation and palmitoylation (probably on one or more of the nearby cysteines at the N-terminus) enable membrane-binding and Golgi apparatus-specific targeting and are essential for efficient packaging. Phosphorylated. Phosphorylation does not seem to be required for recycling to the host Golgi apparatus. Packaging is selective for underphosphorylated forms.

It is found in the virion tegument. It localises to the virion membrane. Its subcellular location is the host cell membrane. The protein localises to the host Golgi apparatus membrane. Plays an important role in the cytoplasmic envelopment of tegument proteins and capsids during the assembly and egress processes. Also participates in viral entry at the fusion step probably by regulating the core fusion machinery. The sequence is that of Cytoplasmic envelopment protein 3 from Homo sapiens (Human).